A 393-amino-acid polypeptide reads, in one-letter code: Ribonucleoside-diphosphate reductase subunit M2 (393 aa).

Ser18 is subject to Phosphoserine. Fe cation is bound by residues Asp142, Glu173, and His176. Residue Tyr180 is part of the active site. Fe cation is bound by residues Glu236, Glu270, and His273.

This sequence belongs to the ribonucleoside diphosphate reductase small chain family. In terms of assembly, heterodimer of a large and a small subunit. It depends on Fe cation as a cofactor.

It localises to the cytoplasm. It catalyses the reaction a 2'-deoxyribonucleoside 5'-diphosphate + [thioredoxin]-disulfide + H2O = a ribonucleoside 5'-diphosphate + [thioredoxin]-dithiol. In terms of biological role, provides the precursors necessary for DNA synthesis. Catalyzes the biosynthesis of deoxyribonucleotides from the corresponding ribonucleotides. In Drosophila melanogaster (Fruit fly), this protein is Ribonucleoside-diphosphate reductase subunit M2 (RnrS).